The following is a 1135-amino-acid chain: Envelopment polyprotein (1135 aa).

The signal sequence occupies residues 1–18; that stretch reads MIMWGLLLTMILIDFGAS. At 19-495 the chain is on the lumenal side; the sequence is LRNVYDMKIE…ALLTTFCFGW (477 aa). 11 disulfide bridges follow: cysteine 29–cysteine 151, cysteine 63–cysteine 157, cysteine 109–cysteine 128, cysteine 133–cysteine 138, cysteine 175–cysteine 185, cysteine 210–cysteine 247, cysteine 234–cysteine 351, cysteine 376–cysteine 435, cysteine 380–cysteine 389, cysteine 405–cysteine 424, and cysteine 452–cysteine 475. N-linked (GlcNAc...) asparagine; by host glycosylation occurs at asparagine 134. Residues asparagine 235 and asparagine 347 are each glycosylated (N-linked (GlcNAc...) asparagine; by host). An N-linked (GlcNAc...) asparagine; by host glycan is attached at asparagine 399. A helical membrane pass occupies residues 496–516; that stretch reads ILILSITLAVLVVLKFFAAIL. The binding to the ribonucleoprotein stretch occupies residues 516–533; sequence LHNSSQENRFKIILRKIK. The Cytoplasmic segment spans residues 517–627; it reads HNSSQENRFK…LNLFRYKSRC (111 aa). 2 CCHC-type zinc fingers span residues 545–565 and 570–591; these read CEVC…NLSC and CPYC…YKVC. 3 binding to the ribonucleoprotein regions span residues 588–605, 592–603, and 611–625; these read YKVC…KKTI, QATHRFRDDLKK, and SPGC…RYKS. Residues 611–634 form the ITAM domain; it reads SPGCYRTLNLFRYKSRCYIFTVWV. Tyrosine 615 and tyrosine 628 each carry phosphotyrosine. The YxxL motif lies at 615-618; that stretch reads YRTL. Residues 628-648 traverse the membrane as a helical segment; sequence YIFTVWVTLLIIESIMWAASA. Residues 649–1105 lie on the Lumenal side of the membrane; it reads SETVLEPSWN…EWITGIFNGN (457 aa). Intrachain disulfides connect cysteine 735-cysteine 770, cysteine 739-cysteine 777, cysteine 751-cysteine 885, cysteine 765-cysteine 896, cysteine 780-cysteine 904, cysteine 806-cysteine 815, cysteine 823-cysteine 832, and cysteine 863-cysteine 867. A fusion loop region spans residues 757–777; that stretch reads FEYENNWGCNPADCPGIGTGC. N-linked (GlcNAc...) asparagine; by host glycosylation occurs at asparagine 928. Cystine bridges form between cysteine 970–cysteine 1000, cysteine 993–cysteine 1045, cysteine 1010–cysteine 1015, cysteine 1046–cysteine 1051, and cysteine 1085–cysteine 1089. A helical transmembrane segment spans residues 1106–1126; sequence WIVIVVLVFFFILSLILLSLL. Residues 1122-1135 form a binding to the ribonucleoprotein region; the sequence is LLSLLCPIRKHKRS. Over 1127–1135 the chain is Cytoplasmic; that stretch reads CPIRKHKRS.

Belongs to the hantavirus envelope glycoprotein family. Homodimer. Homotetramer; forms heterotetrameric Gn-Gc spikes in the pre-fusion conformation. Interacts (via C-terminus) with the nucleoprotein. Interacts with host TUFM; this interaction contributes to the virus-induced degradation of mitochondria by autophagy, which leads to degradation of host MAVS and inhibition of type I interferon (IFN) responses. Interacts with host MAP1LC3B; this interaction contributes to the virus-induced degradation of mitochondria by autophagy, which leads to degradation of host MAVS and inhibition of type I interferon (IFN) responses. As to quaternary structure, homodimer. Homotetramer; forms heterotetrameric Gn-Gc spikes in the pre-fusion conformation. Homotrimer; forms homotrimer in the post-fusion conformation at acidic pH. Interacts (via C-terminus) with the nucleoprotein. Post-translationally, envelope polyprotein precursor is quickly cleaved in vivo just after synthesis, presumably by host signal peptidase.

Its subcellular location is the virion membrane. The protein resides in the host cell surface. The protein localises to the host Golgi apparatus membrane. It is found in the host endoplasmic reticulum membrane. It localises to the host mitochondrion. Its function is as follows. Forms homotetramers with glycoprotein C at the surface of the virion. Attaches the virion to host cell receptors including integrin ITGAV/ITGB3. This attachment induces virion internalization predominantly through clathrin-dependent endocytosis. Mediates the assembly and budding of infectious virus particles through its interaction with the nucleocapsid protein and the viral genome. May dysregulate normal immune and endothelial cell responses through an ITAM motif. Translocates to mitochondria, binds to host TUFM and recruits MAP1LC3B. These interactions induce mitochondrial autophagy and therefore destruction of host MAVS leading to inhibition of type I interferon (IFN) responses. Concomitant breakdown of glycoprotein N is apparently prevented by the nucleoprotein that may inhibit Gn-stimulated autophagosome-lysosome fusion. Interacts with the viral genomic RNA. Functionally, forms homotetramers with glycoprotein N at the surface of the virion. Attaches the virion to host cell receptors including integrin ITGAV/ITGB3. This attachment induces virion internalization predominantly through clathrin-dependent endocytosis. Class II fusion protein that promotes fusion of viral membrane with host endosomal membrane after endocytosis of the virion. The protein is Envelopment polyprotein (GP) of Dobrava-Belgrade orthohantavirus (DOBV).